The following is a 598-amino-acid chain: Elongation factor 4 (598 aa).

The tr-type G domain maps to 2–183 (KKIRNFCIIA…AIIEKIPPPK (182 aa)). GTP is bound by residues 14 to 19 (DHGKST) and 130 to 133 (NKVD).

It belongs to the TRAFAC class translation factor GTPase superfamily. Classic translation factor GTPase family. LepA subfamily.

The protein localises to the cell inner membrane. It carries out the reaction GTP + H2O = GDP + phosphate + H(+). Its function is as follows. Required for accurate and efficient protein synthesis under certain stress conditions. May act as a fidelity factor of the translation reaction, by catalyzing a one-codon backward translocation of tRNAs on improperly translocated ribosomes. Back-translocation proceeds from a post-translocation (POST) complex to a pre-translocation (PRE) complex, thus giving elongation factor G a second chance to translocate the tRNAs correctly. Binds to ribosomes in a GTP-dependent manner. In Flavobacterium johnsoniae (strain ATCC 17061 / DSM 2064 / JCM 8514 / BCRC 14874 / CCUG 350202 / NBRC 14942 / NCIMB 11054 / UW101) (Cytophaga johnsonae), this protein is Elongation factor 4.